The sequence spans 213 residues: Large ribosomal subunit protein uL3 (213 aa).

Q151 is subject to N5-methylglutamine.

It belongs to the universal ribosomal protein uL3 family. Part of the 50S ribosomal subunit. Forms a cluster with proteins L14 and L19. Post-translationally, methylated by PrmB.

Its function is as follows. One of the primary rRNA binding proteins, it binds directly near the 3'-end of the 23S rRNA, where it nucleates assembly of the 50S subunit. The sequence is that of Large ribosomal subunit protein uL3 from Rhizobium johnstonii (strain DSM 114642 / LMG 32736 / 3841) (Rhizobium leguminosarum bv. viciae).